We begin with the raw amino-acid sequence, 521 residues long: Pentatricopeptide repeat-containing protein At4g26680, mitochondrial (521 aa).

Residues 1-38 (MIRISIGVNRRLRYQFSSFAGYSGSENPRLFKTLGAAN) constitute a mitochondrion transit peptide. PPR repeat units lie at residues 167 to 201 (TPRV…GFLP), 202 to 236 (TVES…KISP), 237 to 271 (NPYT…GFRA), 272 to 306 (TDVS…GLQP), 307 to 341 (NVVT…NVAP), 342 to 376 (NTVT…GIQR), 377 to 411 (DILT…NLVP), 412 to 446 (NSST…GCHP), 447 to 481 (NEQT…SIPL), and 482 to 516 (DSRT…KFLQ).

The protein belongs to the PPR family. P subfamily.

It is found in the mitochondrion. This Arabidopsis thaliana (Mouse-ear cress) protein is Pentatricopeptide repeat-containing protein At4g26680, mitochondrial.